The sequence spans 284 residues: MDAIKKKMQMLKLDKENALDRAEQAEADKKGAEDKSKQLEDELVAMQKKMKGTEDELDKYSEALKDAQEKLELAEKKATDAEADVASLNRRIQLVEEELDRAQERLATALQKLEEAEKAADESERGMKVIENRALKDEEKIELQEIQLKEAKHIAEEADRKYEEVARKLVIIEGDLERAEERAELSESKCAELEEELKTVTNNLKSLEAQAEKYSQKEDKYEEEIKVLTDKLKEAETRAEFAERTVAKLEKSIDDLEDELYAQKLKYKAISEELDHALNDMTSI.

The tract at residues 1–40 (MDAIKKKMQMLKLDKENALDRAEQAEADKKGAEDKSKQLE) is disordered. Residues 1-284 (MDAIKKKMQM…DHALNDMTSI (284 aa)) adopt a coiled-coil conformation. The span at 12–40 (KLDKENALDRAEQAEADKKGAEDKSKQLE) shows a compositional bias: basic and acidic residues.

Belongs to the tropomyosin family. Homodimer. Heterodimer of an alpha (TPM1, TPM3 or TPM4) and a beta (TPM2) chain.

It localises to the cytoplasm. It is found in the cytoskeleton. Binds to actin filaments in muscle and non-muscle cells. Plays a central role, in association with the troponin complex, in the calcium dependent regulation of vertebrate striated muscle contraction. Smooth muscle contraction is regulated by interaction with caldesmon. In non-muscle cells is implicated in stabilizing cytoskeleton actin filaments. The chain is Tropomyosin alpha-1 chain (tpm1) from Rana temporaria (European common frog).